Here is a 239-residue protein sequence, read N- to C-terminus: Acidic leucine-rich nuclear phosphoprotein 32 family member B (239 aa).

LRR repeat units follow at residues 16–40 (AADA…LTSE), 43–64 (SLEF…PKLP), 65–87 (KLKK…AERT), and 89–110 (NLTH…EPLK). The 43-residue stretch at 123–165 (CEVTMLNNYRESVFELLPKLTFLDGFDADDQEAPDSDPEAEDL) folds into the LRRCT domain. The span at 149–215 (DADDQEAPDS…EEDEDDEDVP (67 aa)) shows a compositional bias: acidic residues. The segment at 149 to 239 (DADDQEAPDS…EEEEDDEDDE (91 aa)) is disordered. A compositionally biased stretch (basic and acidic residues) spans 216–225 (QGEKRKRDLS). Acidic residues predominate over residues 226 to 239 (DEGEEEEEDDEDDE).

This sequence belongs to the ANP32 family.

It is found in the nucleus. Its function is as follows. Multifunctional protein working as a cell cycle progression factor as well as a cell survival factor. Required for the progression from the G1 to the S phase. Anti-apoptotic protein which functions as a caspase-3 inhibitor. Has no phosphatase 2A (PP2A) inhibitor activity. Exhibits histone chaperone properties, stimulating core histones to assemble into a nucleosome. The chain is Acidic leucine-rich nuclear phosphoprotein 32 family member B (anp32b) from Xenopus laevis (African clawed frog).